Reading from the N-terminus, the 55-residue chain is Photosystem II reaction center protein K (55 aa).

A propeptide spanning residues 1 to 18 (MFNIYLENAFYLNGITFA) is cleaved from the precursor. A helical transmembrane segment spans residues 26–46 (IFDPIVDVMPIIPLFFFLLAF).

It belongs to the PsbK family. As to quaternary structure, PSII is composed of 1 copy each of membrane proteins PsbA, PsbB, PsbC, PsbD, PsbE, PsbF, PsbH, PsbI, PsbJ, PsbK, PsbL, PsbM, PsbT, PsbX, PsbY, PsbZ, Psb30/Ycf12, at least 3 peripheral proteins of the oxygen-evolving complex and a large number of cofactors. It forms dimeric complexes.

The protein resides in the plastid. It localises to the chloroplast thylakoid membrane. Functionally, one of the components of the core complex of photosystem II (PSII). PSII is a light-driven water:plastoquinone oxidoreductase that uses light energy to abstract electrons from H(2)O, generating O(2) and a proton gradient subsequently used for ATP formation. It consists of a core antenna complex that captures photons, and an electron transfer chain that converts photonic excitation into a charge separation. This Marchantia polymorpha (Common liverwort) protein is Photosystem II reaction center protein K.